A 51-amino-acid chain; its full sequence is Large ribosomal subunit protein bL33 (51 aa).

Residues Met-1 to Asp-20 form a disordered region.

Belongs to the bacterial ribosomal protein bL33 family.

This is Large ribosomal subunit protein bL33 from Psychromonas ingrahamii (strain DSM 17664 / CCUG 51855 / 37).